Reading from the N-terminus, the 35-residue chain is Photosystem II reaction center protein T (35 aa).

A helical membrane pass occupies residues 3-23; the sequence is ALVYTFLLVGTLGIIFFAIFF.

This sequence belongs to the PsbT family. PSII is composed of 1 copy each of membrane proteins PsbA, PsbB, PsbC, PsbD, PsbE, PsbF, PsbH, PsbI, PsbJ, PsbK, PsbL, PsbM, PsbT, PsbY, PsbZ, Psb30/Ycf12, at least 3 peripheral proteins of the oxygen-evolving complex and a large number of cofactors. It forms dimeric complexes.

It is found in the plastid. The protein resides in the chloroplast thylakoid membrane. In terms of biological role, found at the monomer-monomer interface of the photosystem II (PS II) dimer, plays a role in assembly and dimerization of PSII. PSII is a light-driven water plastoquinone oxidoreductase, using light energy to abstract electrons from H(2)O, generating a proton gradient subsequently used for ATP formation. In Zygnema circumcarinatum (Green alga), this protein is Photosystem II reaction center protein T.